Reading from the N-terminus, the 163-residue chain is Transcription elongation factor GreB (163 aa).

Residues 54–76 adopt a coiled-coil conformation; the sequence is GKRRMREIDRRIRFLTKRLEAAV.

This sequence belongs to the GreA/GreB family. GreB subfamily.

In terms of biological role, necessary for efficient RNA polymerase transcription elongation past template-encoded arresting sites. The arresting sites in DNA have the property of trapping a certain fraction of elongating RNA polymerases that pass through, resulting in locked ternary complexes. Cleavage of the nascent transcript by cleavage factors such as GreA or GreB allows the resumption of elongation from the new 3'terminus. GreB releases sequences of up to 9 nucleotides in length. In Neisseria meningitidis serogroup B (strain ATCC BAA-335 / MC58), this protein is Transcription elongation factor GreB.